The sequence spans 155 residues: uncharacterized protein (155 aa).

The HTH asnC-type domain occupies 4–65; that stretch reads IDEVDEIILR…IIDHSFLGEF (62 aa). Positions 23-42 form a DNA-binding region, H-T-H motif; sequence LTELSRKVGLTPAAIKNRVE.

This is an uncharacterized protein from Pyrococcus furiosus (strain ATCC 43587 / DSM 3638 / JCM 8422 / Vc1).